Here is a 100-residue protein sequence, read N- to C-terminus: Urease subunit gamma (100 aa).

It belongs to the urease gamma subunit family. Heterotrimer of UreA (gamma), UreB (beta) and UreC (alpha) subunits. Three heterotrimers associate to form the active enzyme.

The protein resides in the cytoplasm. The enzyme catalyses urea + 2 H2O + H(+) = hydrogencarbonate + 2 NH4(+). It functions in the pathway nitrogen metabolism; urea degradation; CO(2) and NH(3) from urea (urease route): step 1/1. This is Urease subunit gamma from Variovorax paradoxus (strain S110).